A 118-amino-acid chain; its full sequence is Small ribosomal subunit protein uS12cz/uS12cy (118 aa).

This sequence belongs to the universal ribosomal protein uS12 family. As to quaternary structure, part of the 30S ribosomal subunit.

Its subcellular location is the plastid. It localises to the chloroplast. With S4 and S5 plays an important role in translational accuracy. Located at the interface of the 30S and 50S subunits. This is Small ribosomal subunit protein uS12cz/uS12cy (rps12-A) from Helianthus annuus (Common sunflower).